We begin with the raw amino-acid sequence, 225 residues long: Doublesex- and mab-3-related transcription factor C1 (225 aa).

A compositionally biased stretch (basic and acidic residues) spans M1 to K12. 2 disordered regions span residues M1–H49 and Q179–G216. Residues R27–K37 are compositionally biased toward basic residues.

It belongs to the DMRT family.

This is Doublesex- and mab-3-related transcription factor C1 (Dmrtc1) from Rattus norvegicus (Rat).